Here is a 91-residue protein sequence, read N- to C-terminus: Cell division topological specificity factor (91 aa).

Belongs to the MinE family.

Prevents the cell division inhibition by proteins MinC and MinD at internal division sites while permitting inhibition at polar sites. This ensures cell division at the proper site by restricting the formation of a division septum at the midpoint of the long axis of the cell. The polypeptide is Cell division topological specificity factor (Desulfitobacterium hafniense (strain DSM 10664 / DCB-2)).